We begin with the raw amino-acid sequence, 1117 residues long: A disintegrin and metalloproteinase with thrombospondin motifs 6 (1117 aa).

A signal peptide spans 1–21 (MEILWKTLTWILSLIMASSEF). Residues 22 to 244 (HSDHRLSYSS…NTHIHHRQKR (223 aa)) constitute a propeptide that is removed on maturation. N99, N172, N222, and N234 each carry an N-linked (GlcNAc...) asparagine glycan. The region spanning 250–468 (RFVETLVVAD…GRGTCLDNEP (219 aa)) is the Peptidase M12B domain. 11 disulfides stabilise this stretch: C326–C387, C362–C369, C381–C463, C420–C447, C490–C512, C501–C519, C507–C542, C532–C547, C570–C607, C574–C612, and C585–C597. A Zn(2+)-binding site is contributed by H403. The active site involves E404. Positions 407 and 413 each coordinate Zn(2+). Residues 495 to 557 (GATSRQCKYG…VPFGTWPQSI (63 aa)) enclose the Disintegrin domain. In terms of domain architecture, TSP type-1 1 spans 558 to 613 (DGGWGPWSLWGECSRTCGGGVSSSLRHCDSPAPSGGGKYCLGERKRYRSCNTDPCP). The tract at residues 717-843 (DAIEGFFNDS…GSGDNEVGFT (127 aa)) is spacer. N-linked (GlcNAc...) asparagine glycosylation occurs at N724. TSP type-1 domains are found at residues 840 to 900 (VGFT…EPCP), 902 to 960 (EWFI…QSCP), 962 to 1007 (QWVA…SKPP), and 1018 to 1073 (PPPR…SKCD). 3 disulfide bridges follow: C911–C954, C915–C959, and C926–C943. N-linked (GlcNAc...) asparagine glycosylation is present at N956. A PLAC domain is found at 1079 to 1117 (NTEECKDVNKVAYCPLVLKFKFCSRAYFRQMCCKTCQGH).

Requires Zn(2+) as cofactor. In terms of processing, the precursor is cleaved by a furin endopeptidase. Glycosylated. Can be O-fucosylated by POFUT2 on a serine or a threonine residue found within the consensus sequence C1-X(2)-(S/T)-C2-G of the TSP type-1 repeat domains where C1 and C2 are the first and second cysteine residue of the repeat, respectively. Fucosylated repeats can then be further glycosylated by the addition of a beta-1,3-glucose residue by the glucosyltransferase, B3GALTL. Fucosylation mediates the efficient secretion of ADAMTS family members. Can also be C-glycosylated with one or two mannose molecules on tryptophan residues within the consensus sequence W-X-X-W of the TPRs, and N-glycosylated. These other glycosylations can also facilitate secretion. In terms of tissue distribution, expressed at low levels in placenta and barely detectable in a number of other tissues.

The protein localises to the secreted. It is found in the extracellular space. Its subcellular location is the extracellular matrix. The protein is A disintegrin and metalloproteinase with thrombospondin motifs 6 (ADAMTS6) of Homo sapiens (Human).